A 115-amino-acid chain; its full sequence is Ustilagic acid biosynthesis cluster protein orf3 (115 aa).

The signal sequence occupies residues 1–38 (MTYSKIACSLGKRGIARAPNQASSFFLLLFLFAKFSQQ). Residues 42–62 (SPCLASSGVAKSRGPASTDRP) are disordered.

The protein operates within secondary metabolite biosynthesis. Part of the gene cluster that mediates the biosynthesis of the glycolipid biosurfactant ustilagic acid (UA). UA is a secreted cellobiose glycolipid that is toxic for many microorganisms and confers biocontrol activity to U.maydis. UA consists of 15,16-dihydroxypalmitic or 2,15,16-trihydroxypalmitic acid, which is O-glycosidically linked to cellobiose at its terminal hydroxyl group. In addition, the cellobiose moiety is acetylated and acylated with a short-chain hydroxy fatty acid. UA biosynthesis starts with omega-hydroxylation of palmitic acid catalyzed by the cytochrome P450 monooxygenase cyp1. Terminal hydroxylation of palmitic acid precedes subterminal hydroxylation catalyzed by the cytochrome P450 monooxygenase cyp2. Sequential glucosylation of the hydroxy fatty acid is probably catalyzed by the glycosyltransferase ugt1. The cellobiose lipid is further decorated by acetylation of the proximal glucose residue and by acylation with a short-chain beta-hydroxy fatty acid at the distal glucose residue. The acyltransferase uat1 may be a good candidate for catalyzing either acetylation or acylation of the cellobiose lipid. The fatty acid synthase fas2 may be involved in synthesis of the carbon backbone of the short-chain beta-hydroxy fatty acid esterified to the cellobiose disaccharide. The secreted UA consists of a mixture of both alpha-hydroxylated and non-hydroxylated glycolipids; therefore, alpha-hydroxylation of the long-chain fatty, catalyzed by the fatty acid hydroxylase ahd1, occurs late in UA biosynthesis and may be the last step before secretion. The polypeptide is Ustilagic acid biosynthesis cluster protein orf3 (Mycosarcoma maydis (Corn smut fungus)).